The sequence spans 32 residues: Beta-1,4-galactosyltransferase 1 (32 aa).

Belongs to the glycosyltransferase 7 family. Requires Mn(2+) as cofactor. In terms of processing, the soluble form derives from the membrane form by proteolytic processing.

The protein localises to the golgi apparatus. It localises to the golgi stack membrane. It is found in the secreted. Its subcellular location is the cell membrane. The protein resides in the cell projection. The protein localises to the filopodium. The catalysed reaction is D-glucose + UDP-alpha-D-galactose = lactose + UDP + H(+). It catalyses the reaction an N-acetyl-beta-D-glucosaminyl derivative + UDP-alpha-D-galactose = a beta-D-galactosyl-(1-&gt;4)-N-acetyl-beta-D-glucosaminyl derivative + UDP + H(+). The enzyme catalyses N-acetyl-D-glucosamine + UDP-alpha-D-galactose = beta-D-galactosyl-(1-&gt;4)-N-acetyl-D-glucosamine + UDP + H(+). It carries out the reaction a beta-D-GlcNAc-(1-&gt;3)-beta-D-Gal-(1-&gt;4)-beta-D-Glc-(1&lt;-&gt;1)-Cer(d18:1(4E)) + UDP-alpha-D-galactose = a neolactoside nLc4Cer(d18:1(4E)) + UDP + H(+). The catalysed reaction is a beta-D-glucosylceramide + UDP-alpha-D-galactose = a beta-D-galactosyl-(1-&gt;4)-beta-D-glucosyl-(1&lt;-&gt;1)-ceramide + UDP + H(+). It catalyses the reaction a neolactoside IV(3)-beta-GlcNAc-nLc4Cer + UDP-alpha-D-galactose = a neolactoside nLc6Cer + UDP + H(+). It functions in the pathway protein modification; protein glycosylation. Its function is as follows. This protein is responsible for the synthesis of complex-type N-linked oligosaccharides in many glycoproteins as well as the carbohydrate moieties of glycolipids. This chain is Beta-1,4-galactosyltransferase 1, found in Rattus norvegicus (Rat).